The sequence spans 226 residues: Ribonuclease 3 (226 aa).

The RNase III domain maps to Thr-6–Asp-128. Mg(2+) is bound at residue Glu-41. Asp-45 is an active-site residue. Asp-114 and Glu-117 together coordinate Mg(2+). Residue Glu-117 is part of the active site. In terms of domain architecture, DRBM spans Asp-155–Leu-225.

Belongs to the ribonuclease III family. Homodimer. Requires Mg(2+) as cofactor.

It is found in the cytoplasm. The catalysed reaction is Endonucleolytic cleavage to 5'-phosphomonoester.. Its function is as follows. Digests double-stranded RNA. Involved in the processing of primary rRNA transcript to yield the immediate precursors to the large and small rRNAs (23S and 16S). Processes some mRNAs, and tRNAs when they are encoded in the rRNA operon. Processes pre-crRNA and tracrRNA of type II CRISPR loci if present in the organism. This is Ribonuclease 3 from Sodalis glossinidius (strain morsitans).